Here is a 193-residue protein sequence, read N- to C-terminus: Interleukin-18 (193 aa).

The propeptide occupies 1 to 36; sequence MAANLIEDNCINLVKMKFVNNTLYFKAESDEGLESD.

The protein belongs to the IL-1 family. Forms a ternary complex with ligand-binding receptor subunit IL18R1 and signaling receptor subunit IL18RAP at the plasma membrane. Mature IL18 first binds to IL18R1 forming a low affinity binary complex, which then interacts with IL18RAP to form a high affinity ternary complex that signals inside the cell. Interacts with cargo receptor TMED10; the interaction mediates the translocation from the cytoplasm into the ERGIC (endoplasmic reticulum-Golgi intermediate compartment) and thereby secretion. The pro-IL-18 precursor is processed by CASP1, CASP4 or CASP5 to yield its mature, active form. The pro-IL-18 precursor features autoinhibitory interactions between the propeptide and the post-cleavage-site region, preventing recognition by the IL18R1 receptor. Processing by CASP1, CASP4 or CASP5 induces conformational changes to generate critical receptor-binding sites. The mature form is then secreted and released in the extracellular milieu by passing through the gasdermin-D (GSDMD) pore. In contrast, cleavage by CASP3 inactivates IL18.

The protein resides in the cytoplasm. It localises to the cytosol. It is found in the secreted. Its function is as follows. Pro-inflammatory cytokine primarily involved in epithelial barrier repair, polarized T-helper 1 (Th1) cell and natural killer (NK) cell immune responses. Upon binding to IL18R1 and IL18RAP, forms a signaling ternary complex which activates NF-kappa-B, triggering synthesis of inflammatory mediators. Synergizes with IL12/interleukin-12 to induce IFNG synthesis from T-helper 1 (Th1) cells and natural killer (NK) cells. Involved in transduction of inflammation downstream of pyroptosis: its mature form is specifically released in the extracellular milieu by passing through the gasdermin-D (GSDMD) pore. The chain is Interleukin-18 (IL18) from Canis lupus familiaris (Dog).